The sequence spans 203 residues: Small ribosomal subunit protein uS4c (203 aa).

Residues 91–159 enclose the S4 RNA-binding domain; it reads MRLDNIIFRL…ISKNIEFYQK (69 aa).

Belongs to the universal ribosomal protein uS4 family. Part of the 30S ribosomal subunit. Contacts protein S5. The interaction surface between S4 and S5 is involved in control of translational fidelity.

The protein resides in the plastid. It localises to the chloroplast. One of the primary rRNA binding proteins, it binds directly to 16S rRNA where it nucleates assembly of the body of the 30S subunit. In terms of biological role, with S5 and S12 plays an important role in translational accuracy. This is Small ribosomal subunit protein uS4c (rps4) from Lopidium concinnum (Moss).